We begin with the raw amino-acid sequence, 1131 residues long: MSSSRPAHSSSSSSRTRQSSQARILAQTTLDAELNAEYEESGDSFDYSKLVEAQRSTPSEQQGRSGKVIAYLQHIQRGKLIQPFGCLLALDEKSFRVIAFSENAPEMLTTVSHAVPNVDDPPKLGIGTNVRSLFTDPGATALQKALGFADVSLLNPILVQCKTSGKPFYAIVHRATGCLVVDFEPVKPTEFPATAAGALQSYKLAAKAISKIQSLPGGSMEALCNTVVKEVFELTGYDRVMAYKFHEDEHGEVFAEITKPGIEPYLGLHYPATDIPQAARFLFMKNKVRMICDCRAKSVKIIEDEALSIDISLCGSTLRAPHSCHLQYMENMNSIASLVMAVVVNENEEDDEPGPEQPPQQQKKKRLWGLIVCHHESPRYVPFPLRYACEFLAQVFAVHVNKEFELEKQIREKSILRMQTMLSDMLFKEASPLSIVSGSPNIMDLVKCDGAALLYGDKVWRLQTAPTESQIRDIAFWLSEVHGDSTGLSTDSLQDAGYPGAASLGDMICGMAVAKITSKDILFWFRSHTAAEIKWGGAKHDPSDKDDNRRMHPRLSFKAFLEVVKMKSLPWSDYEMDAIHSLQLILRGTLNDALKPVQASGLDNQIGDLKLDGLAELQAVTSEMVRLMETATVPILAVDGNGLVNGWNQKVAELSGLRVDEAIGRHILTLVEDSSVSIVQRMLYLALQGKEEKEVRFELKTHGSKRDDGPVILVVNACASRDLHDHVVGVCFVAQDMTVHKLVMDKFTRVEGDYKAIIHNPNPLIPPIFGADQFGWCSEWNVAMTKLTGWHRDEVIDKMLLGEVFDSSNASCLLKSKDDFVRLCIIINSALAGEEAENAPFGLFDRNGKYIECLLSVNRKVNADGVVTGVFCFIHVPSDDLQHALHVQQASEQTAQRRLKAFSYMRHAINKPLSGMLYSRETLKSTGLNEEQMRQVHVADSCHRQLNKILADLDQDNITDKSSCLDLDMAEFVLEDVVVSAVSQVLIGCQGKGIRVACNLPERFMKQKVYGDGIRLQQILSDFLFVSVKFSPVGGSVDISSKLTKNSIGENLHLIDFELRIKHQGAGVPAEILSQMYEEDNKEPSEEGLSLLVSRNLLRLMNGNIRHIREAGMSTFILTAELAAAPSAVGQ.

Positions 1–23 (MSSSRPAHSSSSSSRTRQSSQAR) are enriched in low complexity. The disordered stretch occupies residues 1–26 (MSSSRPAHSSSSSSRTRQSSQARILA). A GAF domain is found at 219-404 (SMEALCNTVV…VFAVHVNKEF (186 aa)). Residue Cys324 coordinates phytochromobilin. 2 PAS domains span residues 620–690 (VTSE…LQGK) and 750–834 (VEGD…LAGE). In terms of domain architecture, Histidine kinase spans 904–1124 (YMRHAINKPL…TFILTAELAA (221 aa)).

This sequence belongs to the phytochrome family. As to quaternary structure, homodimer. Contains one covalently linked phytochromobilin chromophore.

Its function is as follows. Regulatory photoreceptor which exists in two forms that are reversibly interconvertible by light: the Pr form that absorbs maximally in the red region of the spectrum and the Pfr form that absorbs maximally in the far-red region. Photoconversion of Pr to Pfr induces an array of morphogenic responses, whereas reconversion of Pfr to Pr cancels the induction of those responses. Pfr controls the expression of a number of nuclear genes including those encoding the small subunit of ribulose-bisphosphate carboxylase, chlorophyll A/B binding protein, protochlorophyllide reductase, rRNA, etc. It also controls the expression of its own gene(s) in a negative feedback fashion. The sequence is that of Phytochrome a (PHYA) from Sorghum bicolor (Sorghum).